The primary structure comprises 206 residues: MSLYFTTLFLLLTVEMVMLFIFVLPLPFRIRRGIFSTYNQLTAKQQIKTIIFITGCLVGLLFIDSWKRSQIRVSLYHNDNSGSIGSSAVTPIQALASRAYNQRNMYISGFILYFSICIPTVMSIVKRLVKYQGLINEQEKQKLNKPSSNSKKDSNEADSTKLQEELRKKQISLEGLQKQVKNLEKYFDEKNQPGNVAAAEASKKGN.

Residues Met-1–Thr-7 are Lumenal-facing. Residues Leu-8–Phe-28 form a helical membrane-spanning segment. Topologically, residues Arg-29–Gln-45 are cytoplasmic. Residues Gln-46–Trp-66 form a helical membrane-spanning segment. At Lys-67–Asn-104 the chain is on the lumenal side. The helical transmembrane segment at Met-105–Val-125 threads the bilayer. The Cytoplasmic segment spans residues Lys-126–Asn-206. Residues Lys-140–Gln-163 form a disordered region. Over residues Ser-150–Gln-163 the composition is skewed to basic and acidic residues. Lys-190 participates in a covalent cross-link: Glycyl lysine isopeptide (Lys-Gly) (interchain with G-Cter in ubiquitin). A Di-lysine motif motif is present at residues Lys-203–Asn-206.

Belongs to the BCAP29/BCAP31 family.

It localises to the endoplasmic reticulum membrane. Its function is as follows. May play a role in anterograde transport of membrane proteins from the endoplasmic reticulum to the Golgi. The sequence is that of Endoplasmic reticulum transmembrane protein 1 (YET1) from Saccharomyces cerevisiae (strain ATCC 204508 / S288c) (Baker's yeast).